An 86-amino-acid polypeptide reads, in one-letter code: Large ribosomal subunit protein bL27 (86 aa).

This sequence belongs to the bacterial ribosomal protein bL27 family.

The protein is Large ribosomal subunit protein bL27 of Flavobacterium johnsoniae (strain ATCC 17061 / DSM 2064 / JCM 8514 / BCRC 14874 / CCUG 350202 / NBRC 14942 / NCIMB 11054 / UW101) (Cytophaga johnsonae).